Reading from the N-terminus, the 373-residue chain is SUN domain-containing protein 5 (373 aa).

The Nuclear portion of the chain corresponds to 1 to 103 (MPRTRNIGAL…LFCQKVMEKM (103 aa)). The helical transmembrane segment at 104 to 120 (GLLVLCVFGFWMFSMHL) threads the bilayer. At 121–373 (PSKVEVWQDD…PKDSHLEPLS (253 aa)) the chain is on the perinuclear space side. Residues 136–180 (LQSLRMYQEKVRHHTGEIQDLRGSMNQLIAKLQKMEAISDEQKMA) adopt a coiled-coil conformation. One can recognise an SUN domain in the interval 204 to 362 (ASIDFEHTSA…YRVRVHGSVT (159 aa)).

Probable homotrimer. Interacts with DNAJB13. In terms of processing, highly glycosylated in the Golgi apparatus during spermiogenesis. Testis-specific, abundantly expressed in spermatocytes and round spermatids.

It is found in the nucleus inner membrane. It localises to the golgi apparatus. Its function is as follows. Plays an essential role in anchoring sperm head to the tail. Is responsible for the attachment of the coupling apparatus to the sperm nuclear envelope. This is SUN domain-containing protein 5 (Sun5) from Mus musculus (Mouse).